A 1416-amino-acid polypeptide reads, in one-letter code: K homology domain-containing protein 4 (1416 aa).

Disordered regions lie at residues 25–76, 108–174, 196–225, 255–320, and 341–385; these read NPNG…TSMR, KAEA…TRSS, VNSS…LSQS, QNDE…FPGR, and SSLN…MPKP. Composition is skewed to low complexity over residues 196–213, 273–285, and 341–350; these read VNSS…SANH, QSSF…LDQL, and SSLNPPASGS. Polar residues predominate over residues 357-369; the sequence is GLSSAQPLRSPQP. KH domains follow at residues 412 to 504, 508 to 594, 747 to 816, 817 to 892, and 900 to 968; these read FKST…VILD, GLRS…QVSM, FEVR…EELP, AEMS…SVME, and DYIS…DHVP. Disordered regions lie at residues 1215–1240 and 1289–1416; these read AGVS…SGHR and HASG…FDRA. Polar residues predominate over residues 1219-1239; sequence VPTSGGIQFPSQPSLHQQSGH. The segment covering 1343 to 1374 has biased composition (low complexity); the sequence is QQQAQQQLQYQQQQQQQQQQQQQPGYGMPHQP. The segment covering 1391–1402 has biased composition (polar residues); that stretch reads RNTQNPDSTTMD.

In terms of biological role, RNA-binding protein that recognizes the sequence AUACCC via its tandem KH domains 3 and 4, probably in order to promote mRNA instability. Plays an essential role in filamentous growth and virulence. This is K homology domain-containing protein 4 from Mycosarcoma maydis (Corn smut fungus).